The primary structure comprises 396 residues: Alpha-1-antitrypsin (396 aa).

The signal sequence occupies residues 1 to 2; it reads HV. A disordered region spans residues 1–24; sequence HVEDPQGDAAQKTDTSHHDQEHST. Residues 14–24 show a composition bias toward basic and acidic residues; that stretch reads DTSHHDQEHST. Serine 16 is modified (phosphoserine). Asparagine 48, asparagine 85, asparagine 123, and asparagine 249 each carry an N-linked (GlcNAc...) asparagine glycan. The segment at 351–370 is RCL; that stretch reads GAMFLEAIPMSIPPEVKFNK. At serine 361 the chain carries Phosphoserine.

The protein belongs to the serpin family. As to quaternary structure, interacts with CELA2A. Interacts with ERGIC3 and LMAN1/ERGIC53. Interacts with PRSS1/Trypsin. Plasma.

The protein resides in the secreted. In terms of biological role, inhibitor of serine proteases. Its primary target is elastase, but it also has a moderate affinity for plasmin and thrombin. Inhibits trypsin, chymotrypsin and plasminogen activator. The sequence is that of Alpha-1-antitrypsin (SERPINA1) from Chlorocebus aethiops (Green monkey).